The following is a 79-amino-acid chain: Serine protease inhibitor Kazal-type 1-like (79 aa).

A signal peptide spans 1–23 (MKVAIIFLLSALALLNLAGNTTA). The Kazal-like domain maps to 26-79 (IGKKANCPNTLVGCPRDYDPVCGTDGKTYANECILCFENRKFGTSIRIQRRGLC). 3 disulfides stabilise this stretch: C32–C61, C39–C58, and C47–C79.

As to expression, seminal vesicle.

Its subcellular location is the secreted. Its function is as follows. Serine protease inhibitor which exhibits anti-trypsin activity. In the pancreas, protects against trypsin-catalyzed premature activation of zymogens. In the male reproductive tract, binds to sperm heads where it modulates sperm capacitance by inhibiting calcium uptake and nitrogen oxide (NO) production. This is Serine protease inhibitor Kazal-type 1-like from Rattus norvegicus (Rat).